The chain runs to 532 residues: Intercellular adhesion molecule 1 (532 aa).

Positions 1 to 27 are cleaved as a signal peptide; sequence MAPSSPRPALPALLVLLGALFPGPGNA. Topologically, residues 28-480 are extracellular; it reads QTSVSPPKVI…TVNVLSPRYE (453 aa). Ig-like C2-type domains follow at residues 41–103 and 128–193; these read GGSV…QSTA and GKDL…LDLR. Cystine bridges form between C48–C92, C52–C96, and C135–C186. The N-linked (GlcNAc...) asparagine glycan is linked to N145. Positions 152–154 match the Cell attachment site; atypical motif; the sequence is RGE. Residues N183, N202, N267, and N296 are each glycosylated (N-linked (GlcNAc...) asparagine). Ig-like C2-type domains are found at residues 230-297 and 325-378; these read DTQG…LGNQ and GTEV…LEVA. C237 and C290 form a disulfide bridge. Residues C332 and C371 are joined by a disulfide bond. N385 and N406 each carry an N-linked (GlcNAc...) asparagine glycan. Cystine bridges form between C403-C419, C419-C457, and C431-C457. The region spanning 412–464 is the Ig-like C2-type 5 domain; sequence NSQQTPMCQASGNPLPELKCLKDGTFPLPVGESVTVTRDLEGTYLCRARSTQG. Residues 481–503 form a helical membrane-spanning segment; sequence IVIITVVAAAVIMGTAGLSTYLY. At 504-532 the chain is on the cytoplasmic side; that stretch reads NRQRKIRKYRLQQAQKGTPMKPNTQATPP. T521 and T530 each carry phosphothreonine.

This sequence belongs to the immunoglobulin superfamily. ICAM family. As to quaternary structure, homodimer. Interacts with MUC1 and promotes cell aggregation in epithelial cells. Interacts with ARHGEF26/SGEF. Interacts (on T cell side) with CD81, CD247 and CD9 at immunological synapses between antigen-presenting cells and T cells. Post-translationally, monoubiquitinated, which is promoted by MARCH9 and leads to endocytosis.

The protein localises to the membrane. Functionally, ICAM proteins are ligands for the leukocyte adhesion protein LFA-1 (integrin alpha-L/beta-2). During leukocyte trans-endothelial migration, ICAM1 engagement promotes the assembly of endothelial apical cups through ARHGEF26/SGEF and RHOG activation. This chain is Intercellular adhesion molecule 1 (ICAM1), found in Pan paniscus (Pygmy chimpanzee).